Here is a 246-residue protein sequence, read N- to C-terminus: Ribonuclease 3 (246 aa).

Positions 10-143 (LERLEQALDY…LLGAIYLDGG (134 aa)) constitute an RNase III domain. Glu-56 contributes to the Mg(2+) binding site. Residue Asp-60 is part of the active site. Mg(2+)-binding residues include Asn-129 and Glu-132. Residue Glu-132 is part of the active site. Residues 170–239 (DYKTLLQEYL…AQQALELLIE (70 aa)) form the DRBM domain.

Belongs to the ribonuclease III family. As to quaternary structure, homodimer. The cofactor is Mg(2+).

The protein localises to the cytoplasm. It catalyses the reaction Endonucleolytic cleavage to 5'-phosphomonoester.. In terms of biological role, digests double-stranded RNA. Involved in the processing of primary rRNA transcript to yield the immediate precursors to the large and small rRNAs (23S and 16S). Processes some mRNAs, and tRNAs when they are encoded in the rRNA operon. Processes pre-crRNA and tracrRNA of type II CRISPR loci if present in the organism. The protein is Ribonuclease 3 of Magnetococcus marinus (strain ATCC BAA-1437 / JCM 17883 / MC-1).